Reading from the N-terminus, the 780-residue chain is Mediator of RNA polymerase II transcription subunit 15 (780 aa).

Residues 1–124 form an interaction with nhr-49 region; it reads MSEEDWPSPK…PQPTSAQARN (124 aa). Positions 2–96 are interaction with sbp-1; that stretch reads SEEDWPSPKF…SPPCTTAALL (95 aa). Disordered stretches follow at residues 91–152, 166–363, and 564–597; these read TTAA…APSA, PSPD…QGMM, and GPGPIGRDRNSMSGSSMSGPSSGAPSMNPMGTPN. Residues 125–139 are compositionally biased toward low complexity; that stretch reads PPVTVATTQASTTPS. Positions 225 to 245 are enriched in gly residues; the sequence is PPNGYGGYGMMNGPPGSGAPM. Positions 296–316 are enriched in polar residues; that stretch reads QGATPTGPSSVLESLINQPQQ. Composition is skewed to low complexity over residues 333–353 and 574–594; these read AAQRAAAQQQQQQQQQQQQQR and SMSGSSMSGPSSGAPSMNPMG.

Belongs to the Mediator complex subunit 15 family. In terms of assembly, component of the Mediator complex. Interacts with nhr-49, nhr-64 and sbp-1. Expressed in the intestine and head neurons.

It localises to the nucleus. Component of the Mediator complex, a coactivator involved in regulated gene transcription of nearly all RNA polymerase II-dependent genes. Mediator functions as a bridge to convey information from gene-specific regulatory proteins to the basal RNA polymerase II transcription machinery. Mediator is recruited to promoters by direct interactions with regulatory proteins and serves as a scaffold for the assembly of a functional preinitiation complex with RNA polymerase II and the general transcription factors. Required for regulated expression of genes controlling fatty acid desaturation by transcription factors including sbp-1 and nhr-49. Involved in the response to simulated microgravity, in concert with sbp-1, probably acting in the intestine. The protein is Mediator of RNA polymerase II transcription subunit 15 (mdt-15) of Caenorhabditis elegans.